We begin with the raw amino-acid sequence, 443 residues long: C4-dicarboxylate transport protein (443 aa).

Transmembrane regions (helical) follow at residues 7–26 (SLYV…GALF), 46–63 (MVIA…VAHM), 76–98 (ALIY…MNVL), 140–162 (LVSA…FGFA), 183–205 (VVFV…AMAF), 218–240 (LGYL…LGLI), and 350–372 (FITL…ALIL). The segment at 415–443 (GEDLPTTEPDVASEERGEGREIDSSRPVT) is disordered. Over residues 427 to 443 (SEERGEGREIDSSRPVT) the composition is skewed to basic and acidic residues.

Belongs to the dicarboxylate/amino acid:cation symporter (DAACS) (TC 2.A.23) family.

It localises to the cell membrane. In terms of biological role, responsible for the transport of dicarboxylates such as succinate, fumarate, and malate across the membrane. This is C4-dicarboxylate transport protein (dctA) from Deinococcus radiodurans (strain ATCC 13939 / DSM 20539 / JCM 16871 / CCUG 27074 / LMG 4051 / NBRC 15346 / NCIMB 9279 / VKM B-1422 / R1).